The chain runs to 1589 residues: Pentafunctional AROM polypeptide (1589 aa).

The interval 1–392 (MVKFEKVPIL…YGKSAHYVND (392 aa)) is 3-dehydroquinate synthase. NAD(+) is bound by residues 43-45 (DTN), 78-81 (EANK), 109-111 (GGI), and Asp-114. Position 125 (Arg-125) interacts with 7-phospho-2-dehydro-3-deoxy-D-arabino-heptonate. Position 134–135 (134–135 (TS)) interacts with NAD(+). Asp-141 and Lys-147 together coordinate 7-phospho-2-dehydro-3-deoxy-D-arabino-heptonate. Lys-156 lines the NAD(+) pocket. Asn-157 is a 7-phospho-2-dehydro-3-deoxy-D-arabino-heptonate binding site. NAD(+)-binding positions include 174–177 (WLET) and Asn-185. Zn(2+) is bound at residue Glu-189. Residues 189 to 192 (EVIK) and Lys-258 each bind 7-phospho-2-dehydro-3-deoxy-D-arabino-heptonate. The active-site Proton acceptor; for 3-dehydroquinate synthase activity is the Glu-268. Residues 272-276 (RNLLN) and His-279 contribute to the 7-phospho-2-dehydro-3-deoxy-D-arabino-heptonate site. His-279 contacts Zn(2+). His-283 serves as the catalytic Proton acceptor; for 3-dehydroquinate synthase activity. 7-phospho-2-dehydro-3-deoxy-D-arabino-heptonate-binding residues include His-295 and Lys-364. His-295 contributes to the Zn(2+) binding site. The interval 405-872 (VYPFSNIPQE…WDVLHTELGA (468 aa)) is EPSP synthase. The active-site For EPSP synthase activity is Cys-854. The interval 891–1081 (SVVLIGMRAA…VPNKRSAFVC (191 aa)) is shikimate kinase. 896–903 (GMRAAGKS) serves as a coordination point for ATP. The tract at residues 1082–1294 (LTFGDLTEKA…SAPGQLTLAQ (213 aa)) is 3-dehydroquinase. The active-site Proton acceptor; for 3-dehydroquinate dehydratase activity is His-1199. Catalysis depends on Lys-1228, which acts as the Schiff-base intermediate with substrate; for 3-dehydroquinate dehydratase activity. A shikimate dehydrogenase region spans residues 1307–1589 (SKKFFVVGNP…QEIFNAVTRD (283 aa)).

This sequence in the N-terminal section; belongs to the sugar phosphate cyclases superfamily. Dehydroquinate synthase family. It in the 2nd section; belongs to the EPSP synthase family. The protein in the 3rd section; belongs to the shikimate kinase family. In the 4th section; belongs to the type-I 3-dehydroquinase family. This sequence in the C-terminal section; belongs to the shikimate dehydrogenase family. As to quaternary structure, homodimer. The cofactor is Zn(2+).

The protein resides in the cytoplasm. It catalyses the reaction 7-phospho-2-dehydro-3-deoxy-D-arabino-heptonate = 3-dehydroquinate + phosphate. The catalysed reaction is 3-dehydroquinate = 3-dehydroshikimate + H2O. It carries out the reaction shikimate + NADP(+) = 3-dehydroshikimate + NADPH + H(+). The enzyme catalyses shikimate + ATP = 3-phosphoshikimate + ADP + H(+). It catalyses the reaction 3-phosphoshikimate + phosphoenolpyruvate = 5-O-(1-carboxyvinyl)-3-phosphoshikimate + phosphate. It functions in the pathway metabolic intermediate biosynthesis; chorismate biosynthesis; chorismate from D-erythrose 4-phosphate and phosphoenolpyruvate: step 2/7. The protein operates within metabolic intermediate biosynthesis; chorismate biosynthesis; chorismate from D-erythrose 4-phosphate and phosphoenolpyruvate: step 3/7. It participates in metabolic intermediate biosynthesis; chorismate biosynthesis; chorismate from D-erythrose 4-phosphate and phosphoenolpyruvate: step 4/7. Its pathway is metabolic intermediate biosynthesis; chorismate biosynthesis; chorismate from D-erythrose 4-phosphate and phosphoenolpyruvate: step 5/7. It functions in the pathway metabolic intermediate biosynthesis; chorismate biosynthesis; chorismate from D-erythrose 4-phosphate and phosphoenolpyruvate: step 6/7. In terms of biological role, the AROM polypeptide catalyzes 5 consecutive enzymatic reactions in prechorismate polyaromatic amino acid biosynthesis. The sequence is that of Pentafunctional AROM polypeptide from Zygosaccharomyces rouxii (strain ATCC 2623 / CBS 732 / NBRC 1130 / NCYC 568 / NRRL Y-229).